We begin with the raw amino-acid sequence, 461 residues long: Argininosuccinate lyase (461 aa).

Belongs to the lyase 1 family. Argininosuccinate lyase subfamily.

Its subcellular location is the cytoplasm. It carries out the reaction 2-(N(omega)-L-arginino)succinate = fumarate + L-arginine. The protein operates within amino-acid biosynthesis; L-arginine biosynthesis; L-arginine from L-ornithine and carbamoyl phosphate: step 3/3. This chain is Argininosuccinate lyase, found in Dehalococcoides mccartyi (strain CBDB1).